A 246-amino-acid polypeptide reads, in one-letter code: 1-(5-phosphoribosyl)-5-[(5-phosphoribosylamino)methylideneamino] imidazole-4-carboxamide isomerase (246 aa).

Aspartate 8 acts as the Proton acceptor in catalysis. The Proton donor role is filled by aspartate 130.

Belongs to the HisA/HisF family.

The protein localises to the cytoplasm. It carries out the reaction 1-(5-phospho-beta-D-ribosyl)-5-[(5-phospho-beta-D-ribosylamino)methylideneamino]imidazole-4-carboxamide = 5-[(5-phospho-1-deoxy-D-ribulos-1-ylimino)methylamino]-1-(5-phospho-beta-D-ribosyl)imidazole-4-carboxamide. It functions in the pathway amino-acid biosynthesis; L-histidine biosynthesis; L-histidine from 5-phospho-alpha-D-ribose 1-diphosphate: step 4/9. The polypeptide is 1-(5-phosphoribosyl)-5-[(5-phosphoribosylamino)methylideneamino] imidazole-4-carboxamide isomerase (Shigella dysenteriae serotype 1 (strain Sd197)).